The following is a 211-amino-acid chain: MANAGLQLLGFILASLGWIGSIVSTALPQWKIYSYAGDNIVTAQAIYEGLWMSCVSQSTGQIQCKVFDSLLNLNSTLQATRALMVIGILLGLIAIFVSTIGMKCMRCLEDDEVQKMWMAVIGGIIFLISGLATLVATAWYGNRIVQEFYDPLTPINARYEFGQALFTGWAAASLCLLGGVLLSCSCPRKTTSYPTPRPYPKPTPSSGKDYV.

Topologically, residues 1-7 are cytoplasmic; sequence MANAGLQ. The helical transmembrane segment at 8 to 28 threads the bilayer; that stretch reads LLGFILASLGWIGSIVSTALP. At 29-81 the chain is on the extracellular side; it reads QWKIYSYAGDNIVTAQAIYEGLWMSCVSQSTGQIQCKVFDSLLNLNSTLQATR. C54 and C64 are oxidised to a cystine. The chain crosses the membrane as a helical span at residues 82–102; it reads ALMVIGILLGLIAIFVSTIGM. Topologically, residues 103–115 are cytoplasmic; sequence KCMRCLEDDEVQK. Residues 116–136 traverse the membrane as a helical segment; that stretch reads MWMAVIGGIIFLISGLATLVA. Residues 137–163 lie on the Extracellular side of the membrane; that stretch reads TAWYGNRIVQEFYDPLTPINARYEFGQ. The helical transmembrane segment at 164–184 threads the bilayer; it reads ALFTGWAAASLCLLGGVLLSC. Over 185–211 the chain is Cytoplasmic; that stretch reads SCPRKTTSYPTPRPYPKPTPSSGKDYV. A disordered region spans residues 190 to 211; it reads TTSYPTPRPYPKPTPSSGKDYV. Positions 210–211 are interactions with TJP1, TJP2, TJP3 and PATJ; that stretch reads YV.

The protein belongs to the claudin family. In terms of assembly, can form homo- and heteropolymers with other CLDN. Homopolymers interact with CLDN3, but not CLDN2, homopolymers. Directly interacts with TJP1/ZO-1, TJP2/ZO-2 and TJP3/ZO-3. Interacts with MPDZ and PATJ. Interacts with OCLN, CD81, CLDN4, CLDN6 and CLDN9. In terms of tissue distribution, detected in epidermis and liver (at protein level). Widely expressed, with highest levels in liver and kidney.

The protein localises to the cell junction. It localises to the tight junction. It is found in the cell membrane. Its subcellular location is the basolateral cell membrane. Its function is as follows. Claudins function as major constituents of the tight junction complexes that regulate the permeability of epithelia. While some claudin family members play essential roles in the formation of impermeable barriers, others mediate the permeability to ions and small molecules. Often, several claudin family members are coexpressed and interact with each other, and this determines the overall permeability. CLDN1 is required to prevent the paracellular diffusion of small molecules through tight junctions in the epidermis and is required for the normal barrier function of the skin. Required for normal water homeostasis and to prevent excessive water loss through the skin, probably via an indirect effect on the expression levels of other proteins, since CLDN1 itself seems to be dispensable for water barrier formation in keratinocyte tight junctions. This is Claudin-1 (Cldn1) from Mus musculus (Mouse).